The primary structure comprises 504 residues: AMP phosphorylase 1 (504 aa).

Residues Gly169, 195–200, and Thr204 contribute to the AMP site; that span reads SRAITS. The active-site Proton donor is the Asp257. AMP contacts are provided by Ser265 and Lys289.

This sequence belongs to the thymidine/pyrimidine-nucleoside phosphorylase family. Type 2 subfamily.

It catalyses the reaction AMP + phosphate = alpha-D-ribose 1,5-bisphosphate + adenine. It carries out the reaction CMP + phosphate = cytosine + alpha-D-ribose 1,5-bisphosphate. The enzyme catalyses UMP + phosphate = alpha-D-ribose 1,5-bisphosphate + uracil. Functionally, catalyzes the conversion of AMP and phosphate to adenine and ribose 1,5-bisphosphate (R15P). Exhibits phosphorylase activity toward CMP and UMP in addition to AMP. Functions in an archaeal AMP degradation pathway, together with R15P isomerase and RubisCO. This Archaeoglobus fulgidus (strain ATCC 49558 / DSM 4304 / JCM 9628 / NBRC 100126 / VC-16) protein is AMP phosphorylase 1.